We begin with the raw amino-acid sequence, 401 residues long: Type 3 secretion system translocon protein SctE (401 aa).

Residues 129 to 160 (IQRLHEQNMKKIEENQEKIKETEENAKQVKKS) adopt a coiled-coil conformation. Helical transmembrane passes span 176–196 (VIVG…AMMV) and 224–244 (ILGP…TVMT). Positions 345–379 (LALNKADMAALQSIIDRLKEELSHLSESHQQVMEL) form a coiled coil.

Belongs to the SctE/SipB/YopB family. The core secretion machinery of the T3SS is composed of approximately 20 different proteins, including cytoplasmic components, a base, an export apparatus and a needle. This subunit is involved in the formation of a pore, called the translocon, in host membrane. Interacts with YopD/SctB. Together with YopD/SctB, forms a multimeric integral membrane complex.

The protein resides in the secreted. It is found in the host membrane. Functionally, component of the type III secretion system (T3SS), also called injectisome, which is used to inject bacterial effector proteins into eukaryotic host cells. YopB/SctE and YopD/SctB are inserted into the host membrane where they form a pore and allow the translocation of effector proteins into the cytosol of target cells. Is an essential virulence determinant. Required for YopE and YopH translocation. Shows membrane disruptive activity in vitro. In terms of biological role, interaction with the host cell triggers a signaling response, via activation of the small GTPase Ras, the MAPK kinases ERK and JNK and the nuclear factor NF-kappa-B pathways, and production of the proinflammatory cytokine interleukin-8 (IL-8). YopB/SctE-dependent signaling response is counteracted by YopE, YopH and YopJ in infected host cells. YopB/SctE is directly responsible for signaling and its insertion in the membrane is important to activate the signaling response in the host cell. In Yersinia pseudotuberculosis serotype I (strain IP32953), this protein is Type 3 secretion system translocon protein SctE.